The sequence spans 423 residues: Sulfate adenylyltransferase (423 aa).

Gln-207 and Arg-209 together coordinate sulfate. ATP is bound by residues 207–210 and 301–304; these read QLRN and GRDH. Active-site residues include Arg-209 and Asn-210. Sulfate is bound at residue Ala-305.

Belongs to the sulfate adenylyltransferase family.

The protein localises to the mitosome. The enzyme catalyses sulfate + ATP + H(+) = adenosine 5'-phosphosulfate + diphosphate. Its pathway is sulfur metabolism; hydrogen sulfide biosynthesis; sulfite from sulfate: step 1/3. Its function is as follows. Catalyzes the first intracellular reaction of sulfate assimilation, forming adenosine-5'-phosphosulfate (APS) from inorganic sulfate and ATP. This is Sulfate adenylyltransferase from Entamoeba histolytica (strain ATCC 30459 / HM-1:IMSS / ABRM).